We begin with the raw amino-acid sequence, 606 residues long: MAADVSVTHRPPLSPKSGAEVEAGDAAERRAPEEELPPLDPEEIRKRLEHTERQFRNRRKILIRGLPGDVTNQEVHDLLSDYELKYCFVDKYKGTAFVTLLNGEQAEAAINAFHQSRLRERELSVQLQPTDALLCVANLPPSLTQQQFEELVRPFGSLERCFLVYSERTGQSKGYGFAEYMKKDSAARAKSDLLGKPLGPRTLYVHWTDAGQLTPALLHSRCLCVDRLPPGFNDVDALCRALSAVHSPTFCQLACGQDGQLKGFAVLEYETAEMAEEAQQQADGLSLGGSHLRVSFCAPGPPGRSMLAALIAAQATALNRGKGLLPEPNILQLLNNLGPSASLQLLLNPLLHGSAGGKQGLLGAPPAMPLLNGPALSTALLQLALQTQGQKKPGILGDSPLGALQPGAQPANPLLGELPAGGGLPPELPPRRGKPPPLLPSVLGPAGGDREALGLGPPAAQLTPPPAPVGLRGSGLRGPLSHFYSGSPTSYFTSGLQAGLKQSHLSKAIGSSPLGSGEGLLGLSPGPNGHSHLLKVRAGGGDMQGWEAPAPQRPLTRPALPSVSRPHWAARNAALPTCCPRPSPAQKAAMWASTPRASAATTRTPT.

Residues 1–41 (MAADVSVTHRPPLSPKSGAEVEAGDAAERRAPEEELPPLDP) form a disordered region. Ala2 carries the post-translational modification N-acetylalanine. Phosphoserine is present on residues Ser6 and Ser14. A Nuclear localization signal motif is present at residues 45–60 (RKRLEHTERQFRNRRK). RRM domains lie at 59-130 (RKIL…LQPT), 132-210 (ALLC…WTDA), and 221-299 (RCLC…FCAP). Residues 307-395 (LAALIAAQAT…QTQGQKKPGI (89 aa)) form an interaction with PTBP1 region. A disordered region spans residues 391 to 474 (KKPGILGDSP…PPAPVGLRGS (84 aa)). The segment covering 453–462 (LGLGPPAAQL) has biased composition (low complexity). Thr463 is subject to Phosphothreonine. Residue Ser474 is modified to Phosphoserine. Phosphothreonine is present on Pro488. The interval 519 to 564 (GLLGLSPGPNGHSHLLKVRAGGGDMQGWEAPAPQRPLTRPALPSVS) is disordered. Phosphoserine is present on residues Ser562 and His567. Residues 579 to 606 (CPRPSPAQKAAMWASTPRASAATTRTPT) form a disordered region. Residues 592–606 (ASTPRASAATTRTPT) are compositionally biased toward low complexity.

As to quaternary structure, interacts with PTBP1, RAVER2, VCL and ACTN1. Part of a complex containing RAVER1, VCL and ACTN1.

Its subcellular location is the nucleus. It localises to the cytoplasm. Functionally, cooperates with PTBP1 to modulate regulated alternative splicing events. Promotes exon skipping. Cooperates with PTBP1 to modulate switching between mutually exclusive exons during maturation of the TPM1 pre-mRNA. The sequence is that of Ribonucleoprotein PTB-binding 1 (RAVER1) from Homo sapiens (Human).